A 71-amino-acid chain; its full sequence is MFTLKKSMLLLFFLGTINLSLCEEERDADEEERRDNPDESEVEVEKRFLPLLAGLAANFLPKIFCKITRKC.

A signal peptide spans 1 to 22 (MFTLKKSMLLLFFLGTINLSLC). Residues 23 to 45 (EEERDADEEERRDNPDESEVEVE) constitute a propeptide that is removed on maturation. The cysteines at positions 65 and 71 are disulfide-linked.

This sequence belongs to the frog skin active peptide (FSAP) family. Brevinin subfamily. Expressed by the skin glands.

It localises to the secreted. Shows antibacterial activity against representative Gram-negative and Gram-positive bacterial species, and a very high hemolytic activity. This Pelophylax lessonae (Pool frog) protein is Brevinin-1E.